Here is a 156-residue protein sequence, read N- to C-terminus: Small ribosomal subunit protein uS7 (156 aa).

The protein belongs to the universal ribosomal protein uS7 family. As to quaternary structure, part of the 30S ribosomal subunit. Contacts proteins S9 and S11.

One of the primary rRNA binding proteins, it binds directly to 16S rRNA where it nucleates assembly of the head domain of the 30S subunit. Is located at the subunit interface close to the decoding center, probably blocks exit of the E-site tRNA. This is Small ribosomal subunit protein uS7 from Psychromonas ingrahamii (strain DSM 17664 / CCUG 51855 / 37).